The following is a 470-amino-acid chain: MNPNQKIIAIGSASLGILILNVILHVVSIIVTVLVLNNNGTGLYCNGTIIREYNETVRVERITQWYNTNTIEYIERPSNEYYMNNTEPLCEAQGFAPFSKDNGIRIGSRGHVFVIREPFVSCSPLECRTFFLTQGSLLNDKHSNGTVKDRSPYRTFMSVKVGQSPNVYQARFEAVAWSATACHDGKKWMTVGVTGPDAQAVAVVHYGGVPVDIINSWAGDILRTQESSCTCIKGDCYWVMTDGPANRQAKYRIFKAKDGRIIGQTDINFNGGHIEECSCYPNEGKVECVCRDNWTGTNRPILVISPDLSYTVGYLCAGIPTDTPRGEDSQFTGSCTSPLGNQGYGVKGFGFRQGNDVWAGRTISRTSRLGFEIIKIRNGWTQNSKDQIRKQVIVDNLNWSGYSGSFTLPVELTKKGCLVPCFWVEMIRGKPEETTIWTSSSSIVMCGVDHKIASWSWHDGAILPFDIDKM.

Topologically, residues 1-14 are intravirion; sequence MNPNQKIIAIGSAS. An involved in apical transport and lipid raft association region spans residues 11–32; that stretch reads GSASLGILILNVILHVVSIIVT. The helical transmembrane segment at 15 to 35 threads the bilayer; that stretch reads LGILILNVILHVVSIIVTVLV. The tract at residues 32-86 is hypervariable stalk region; it reads TVLVLNNNGTGLYCNGTIIREYNETVRVERITQWYNTNTIEYIERPSNEYYMNNT. The Virion surface segment spans residues 36-470; that stretch reads LNNNGTGLYC…AILPFDIDKM (435 aa). Asn-39, Asn-46, Asn-54, and Asn-84 each carry an N-linked (GlcNAc...) asparagine; by host glycan. Residues 89 to 470 form a head of neuraminidase region; it reads LCEAQGFAPF…AILPFDIDKM (382 aa). Intrachain disulfides connect Cys-90-Cys-417, Cys-122-Cys-127, Cys-182-Cys-229, Cys-231-Cys-236, Cys-277-Cys-290, Cys-279-Cys-288, Cys-316-Cys-335, and Cys-421-Cys-446. Arg-116 is a binding site for substrate. The N-linked (GlcNAc...) asparagine; by host glycan is linked to Asn-144. Asp-149 serves as the catalytic Proton donor/acceptor. A substrate-binding site is contributed by Arg-150. 275–276 is a binding site for substrate; sequence EE. Arg-291 lines the substrate pocket. Asp-292 provides a ligand contact to Ca(2+). The N-linked (GlcNAc...) asparagine; by host glycan is linked to Asn-293. Positions 296 and 322 each coordinate Ca(2+). Arg-368 is a binding site for substrate. The N-linked (GlcNAc...) asparagine; by host glycan is linked to Asn-398. The active-site Nucleophile is the Tyr-402.

It belongs to the glycosyl hydrolase 34 family. As to quaternary structure, homotetramer. The cofactor is Ca(2+). N-glycosylated.

Its subcellular location is the virion membrane. The protein resides in the host apical cell membrane. It carries out the reaction Hydrolysis of alpha-(2-&gt;3)-, alpha-(2-&gt;6)-, alpha-(2-&gt;8)- glycosidic linkages of terminal sialic acid residues in oligosaccharides, glycoproteins, glycolipids, colominic acid and synthetic substrates.. Its activity is regulated as follows. Inhibited by the neuraminidase inhibitors zanamivir (Relenza) and oseltamivir (Tamiflu). These drugs interfere with the release of progeny virus from infected cells and are effective against all influenza strains. Resistance to neuraminidase inhibitors is quite rare. In terms of biological role, catalyzes the removal of terminal sialic acid residues from viral and cellular glycoconjugates. Cleaves off the terminal sialic acids on the glycosylated HA during virus budding to facilitate virus release. Additionally helps virus spread through the circulation by further removing sialic acids from the cell surface. These cleavages prevent self-aggregation and ensure the efficient spread of the progeny virus from cell to cell. Otherwise, infection would be limited to one round of replication. Described as a receptor-destroying enzyme because it cleaves a terminal sialic acid from the cellular receptors. May facilitate viral invasion of the upper airways by cleaving the sialic acid moieties on the mucin of the airway epithelial cells. Likely to plays a role in the budding process through its association with lipid rafts during intracellular transport. May additionally display a raft-association independent effect on budding. Plays a role in the determination of host range restriction on replication and virulence. Sialidase activity in late endosome/lysosome traffic seems to enhance virus replication. In Influenza A virus (strain A/Equine/New Market/1979 H3N8), this protein is Neuraminidase.